The sequence spans 153 residues: MISQSTLFLFILLIIGLIAKNQSLIVAICVLFVLKWTFLGDKILPYLQTKGINLGVTVITIAVLVPIATGEIGFKQLGEATKSYYAWIALASGIAVALLAKGGLQLLTNDPHITTALVFGTIIAVALFNGVAVGPLIGAGIAYAVMNIIQMFK.

4 helical membrane passes run 8-28 (FLFI…IVAI), 54-74 (LGVT…EIGF), 87-107 (WIAL…LQLL), and 117-137 (LVFG…GPLI).

It belongs to the UPF0756 family.

The protein resides in the cell membrane. The chain is UPF0756 membrane protein Bcer98_3279 from Bacillus cytotoxicus (strain DSM 22905 / CIP 110041 / 391-98 / NVH 391-98).